Reading from the N-terminus, the 328-residue chain is uncharacterized protein (328 aa).

The disordered stretch occupies residues 1-22 (MPVKPNQPRPSTKQDPSSGASR). Residues 9–21 (RPSTKQDPSSGAS) are compositionally biased toward polar residues. Transmembrane regions (helical) follow at residues 66-86 (FSFL…GFVL), 126-146 (TVGL…IGNL), 176-196 (FLSL…TSVA), 221-241 (LIAL…ILWV), 255-275 (GTLM…VALP), and 290-310 (IGLM…AAWI).

To E.coli YhjD.

Its subcellular location is the cell inner membrane. This is an uncharacterized protein from Dickeya dadantii (strain 3937) (Erwinia chrysanthemi (strain 3937)).